Consider the following 714-residue polypeptide: Fatty acid oxidation complex subunit alpha (714 aa).

Positions 1 to 190 are enoyl-CoA hydratase; it reads MEMASAFTLN…KLGLVDDVVP (190 aa). Positions 306–714 are 3-hydroxyacyl-CoA dehydrogenase; sequence APLNSVGILG…FWKTTATDLQ (409 aa).

In the N-terminal section; belongs to the enoyl-CoA hydratase/isomerase family. It in the central section; belongs to the 3-hydroxyacyl-CoA dehydrogenase family. As to quaternary structure, heterotetramer of two alpha chains (FadJ) and two beta chains (FadI).

The protein localises to the cytoplasm. It carries out the reaction a (3S)-3-hydroxyacyl-CoA = a (2E)-enoyl-CoA + H2O. It catalyses the reaction a 4-saturated-(3S)-3-hydroxyacyl-CoA = a (3E)-enoyl-CoA + H2O. The catalysed reaction is a (3S)-3-hydroxyacyl-CoA + NAD(+) = a 3-oxoacyl-CoA + NADH + H(+). The enzyme catalyses (3S)-3-hydroxybutanoyl-CoA = (3R)-3-hydroxybutanoyl-CoA. The protein operates within lipid metabolism; fatty acid beta-oxidation. In terms of biological role, catalyzes the formation of a hydroxyacyl-CoA by addition of water on enoyl-CoA. Also exhibits 3-hydroxyacyl-CoA epimerase and 3-hydroxyacyl-CoA dehydrogenase activities. This is Fatty acid oxidation complex subunit alpha from Escherichia coli (strain ATCC 8739 / DSM 1576 / NBRC 3972 / NCIMB 8545 / WDCM 00012 / Crooks).